The following is a 216-amino-acid chain: UPF0502 protein Pfl01_3711 (216 aa).

It belongs to the UPF0502 family.

This chain is UPF0502 protein Pfl01_3711, found in Pseudomonas fluorescens (strain Pf0-1).